Here is a 421-residue protein sequence, read N- to C-terminus: Diaminopimelate decarboxylase (421 aa).

N6-(pyridoxal phosphate)lysine is present on Lys-62. Pyridoxal 5'-phosphate is bound by residues Gly-237 and 279–282 (EPGR). Residues Arg-282, Arg-319, and Tyr-323 each coordinate substrate. Catalysis depends on Cys-349, which acts as the Proton donor. 2 residues coordinate substrate: Glu-350 and Tyr-379. Tyr-379 contributes to the pyridoxal 5'-phosphate binding site.

The protein belongs to the Orn/Lys/Arg decarboxylase class-II family. LysA subfamily. Homodimer. It depends on pyridoxal 5'-phosphate as a cofactor.

It carries out the reaction meso-2,6-diaminopimelate + H(+) = L-lysine + CO2. Its pathway is amino-acid biosynthesis; L-lysine biosynthesis via DAP pathway; L-lysine from DL-2,6-diaminopimelate: step 1/1. In terms of biological role, specifically catalyzes the decarboxylation of meso-diaminopimelate (meso-DAP) to L-lysine. Plays a role in beta-lactam antibiotic resistance. This chain is Diaminopimelate decarboxylase (lysA), found in Staphylococcus aureus (strain COL).